A 133-amino-acid chain; its full sequence is Holo-[acyl-carrier-protein] synthase (133 aa).

Residues Asp-8 and Glu-56 each coordinate Mg(2+).

It belongs to the P-Pant transferase superfamily. AcpS family. The cofactor is Mg(2+).

The protein localises to the cytoplasm. The catalysed reaction is apo-[ACP] + CoA = holo-[ACP] + adenosine 3',5'-bisphosphate + H(+). Functionally, transfers the 4'-phosphopantetheine moiety from coenzyme A to a Ser of acyl-carrier-protein. The polypeptide is Holo-[acyl-carrier-protein] synthase (Deinococcus radiodurans (strain ATCC 13939 / DSM 20539 / JCM 16871 / CCUG 27074 / LMG 4051 / NBRC 15346 / NCIMB 9279 / VKM B-1422 / R1)).